A 226-amino-acid chain; its full sequence is Probable transcriptional regulatory protein y4xI (226 aa).

Residues 1–114 (MRTLLVDTDL…ELIARMRALL (114 aa)) form the Response regulatory domain. A DNA-binding region (ompR/PhoB-type) is located at residues 122 to 220 (CPIIEFGNLH…VRGIGYTLEL (99 aa)).

The protein resides in the cytoplasm. The polypeptide is Probable transcriptional regulatory protein y4xI (Sinorhizobium fredii (strain NBRC 101917 / NGR234)).